Consider the following 205-residue polypeptide: Large ribosomal subunit protein uL4 (205 aa).

The protein belongs to the universal ribosomal protein uL4 family. As to quaternary structure, part of the 50S ribosomal subunit.

One of the primary rRNA binding proteins, this protein initially binds near the 5'-end of the 23S rRNA. It is important during the early stages of 50S assembly. It makes multiple contacts with different domains of the 23S rRNA in the assembled 50S subunit and ribosome. Functionally, forms part of the polypeptide exit tunnel. The sequence is that of Large ribosomal subunit protein uL4 from Dinoroseobacter shibae (strain DSM 16493 / NCIMB 14021 / DFL 12).